Here is a 339-residue protein sequence, read N- to C-terminus: T-cell surface glycoprotein CD1a (339 aa).

The signal sequence occupies residues 1-18 (MLFLQLPLLLVLLPGGDS). Residues 19 to 300 (EEGFQEPISF…IILYWEQHSS (282 aa)) lie on the Extracellular side of the membrane. Residues Asn38 and Asn75 are each glycosylated (N-linked (GlcNAc...) asparagine). A D-galactosylceramide is bound at residue 91–95 (FFVRF). Disulfide bonds link Cys120-Cys184 and Cys224-Cys279. The N-linked (GlcNAc...) asparagine glycan is linked to Asn146. The region spanning 185 to 295 (PRFVLGLLDA…LGGQDIILYW (111 aa)) is the Ig-like domain. Residues 301–321 (VGWILLAVIVPLVLLTGLAFW) form a helical membrane-spanning segment. At 322 to 339 (HRKHWKHCDPSSALHRLE) the chain is on the cytoplasmic side.

In terms of assembly, heterodimer with B2M (beta-2-microglobulin). Interacts with CD74.

Its subcellular location is the cell membrane. The protein resides in the membrane raft. It is found in the endosome membrane. In terms of biological role, antigen-presenting protein that binds self and non-self lipid and glycolipid antigens and presents them to T-cell receptors on natural killer T-cells. The sequence is that of T-cell surface glycoprotein CD1a (CD1A) from Sus scrofa (Pig).